Reading from the N-terminus, the 639-residue chain is tRNA-dihydrouridine(47) synthase [NAD(P)(+)]-like (639 aa).

2 stretches are compositionally biased toward polar residues: residues 1–19 and 54–65; these read MAES…TVTQ and QTCSELSGNDAE. Disordered regions lie at residues 1-20 and 52-122; these read MAES…VTQK and DKQT…HSQF. Over residues 66–85 the composition is skewed to basic and acidic residues; that stretch reads NTVRAEDAAEPEAKRIKLDD. The span at 103–119 shows a compositional bias: basic residues; it reads EKKRARGQNKSRPHMKH. 2 consecutive C3H1-type zinc fingers follow at residues 122–152 and 160–190; these read FEEN…HDVA and EDIR…HLGD. FMN is bound by residues 300–302 and Gln-354; that span reads PLT. The active-site Proton donor is the Cys-385. FMN contacts are provided by residues Lys-424, His-454, 486–488, and 509–510; these read NGD and AR.

This sequence belongs to the Dus family. Dus3 subfamily. The cofactor is FMN.

It carries out the reaction 5,6-dihydrouridine(47) in tRNA + NAD(+) = uridine(47) in tRNA + NADH + H(+). The catalysed reaction is 5,6-dihydrouridine(47) in tRNA + NADP(+) = uridine(47) in tRNA + NADPH + H(+). It catalyses the reaction a 5,6-dihydrouridine in mRNA + NAD(+) = a uridine in mRNA + NADH + H(+). The enzyme catalyses a 5,6-dihydrouridine in mRNA + NADP(+) = a uridine in mRNA + NADPH + H(+). Its function is as follows. Catalyzes the synthesis of dihydrouridine, a modified base, in various RNAs, such as tRNAs, mRNAs and some long non-coding RNAs (lncRNAs). Mainly modifies the uridine in position 47 (U47) in the D-loop of most cytoplasmic tRNAs. Also able to mediate the formation of dihydrouridine in some mRNAs, thereby regulating their translation. In Xenopus tropicalis (Western clawed frog), this protein is tRNA-dihydrouridine(47) synthase [NAD(P)(+)]-like (dus3l).